We begin with the raw amino-acid sequence, 112 residues long: Integration host factor subunit alpha (112 aa).

The protein belongs to the bacterial histone-like protein family. In terms of assembly, heterodimer of an alpha and a beta chain.

Its function is as follows. This protein is one of the two subunits of integration host factor, a specific DNA-binding protein that functions in genetic recombination as well as in transcriptional and translational control. The chain is Integration host factor subunit alpha from Allorhizobium ampelinum (strain ATCC BAA-846 / DSM 112012 / S4) (Agrobacterium vitis (strain S4)).